A 521-amino-acid polypeptide reads, in one-letter code: Cytochrome P450 1A1 (521 aa).

Phenylalanine 229 lines the substrate pocket. Cysteine 463 contacts heme.

It belongs to the cytochrome P450 family. Heme serves as cofactor.

The protein localises to the endoplasmic reticulum membrane. It is found in the microsome membrane. It carries out the reaction an organic molecule + reduced [NADPH--hemoprotein reductase] + O2 = an alcohol + oxidized [NADPH--hemoprotein reductase] + H2O + H(+). Its function is as follows. Cytochromes P450 are a group of heme-thiolate monooxygenases. They oxidize a variety of structurally unrelated compounds, including steroids, fatty acids, and xenobiotics. This chain is Cytochrome P450 1A1 (cyp1a1), found in Platichthys flesus (European flounder).